We begin with the raw amino-acid sequence, 401 residues long: Nodal homolog 3-A (401 aa).

Residues 1-18 (MAFLSLFLCLVFSSPLMA) form the signal peptide. Positions 19–274 (MPPALQGRKA…KVNGFRRLRR (256 aa)) are excised as a propeptide. Residues Asn168, Asn337, and Asn344 are each glycosylated (N-linked (GlcNAc...) asparagine). Disulfide bonds link Cys299–Cys365 and Cys328–Cys396.

This sequence belongs to the TGF-beta family. Monomer. The propeptide region interacts with bmp4 in a non-covalent manner. Expressed in the dorsal marginal region of late blastula, becoming restricted to the Spemann organizer at the early gastrula stage.

It localises to the secreted. Its function is as follows. Exhibits mesoderm-dorsalizing activity and neural-inducing activity, but lacks mesoderm-inducing activity. Regulates the expression of specific mesodermal and neural genes. Induces convergent extension movements at the embryonic midline by activating the fgf signaling pathway to induce t/bra expression in the organizer region. Acts with wnt11 to induce Spemann organizer cells and induce axis formation. The unprocessed protein antagonizes bmp-signaling. This is Nodal homolog 3-A from Xenopus tropicalis (Western clawed frog).